Consider the following 311-residue polypeptide: Ketoisovalerate oxidoreductase subunit VorB (311 aa).

In terms of assembly, heterotetramer of one alpha, one beta, one delta and one gamma chain.

It carries out the reaction 3-methyl-2-oxobutanoate + 2 oxidized [2Fe-2S]-[ferredoxin] + CoA = 2-methylpropanoyl-CoA + 2 reduced [2Fe-2S]-[ferredoxin] + CO2 + H(+). This Pyrococcus furiosus (strain ATCC 43587 / DSM 3638 / JCM 8422 / Vc1) protein is Ketoisovalerate oxidoreductase subunit VorB (vorB).